The following is a 178-amino-acid chain: ATP-dependent protease subunit HslV (178 aa).

T7 is a catalytic residue. Residues G162, C165, and T168 each contribute to the Na(+) site.

This sequence belongs to the peptidase T1B family. HslV subfamily. A double ring-shaped homohexamer of HslV is capped on each side by a ring-shaped HslU homohexamer. The assembly of the HslU/HslV complex is dependent on binding of ATP.

It is found in the cytoplasm. It carries out the reaction ATP-dependent cleavage of peptide bonds with broad specificity.. Its activity is regulated as follows. Allosterically activated by HslU binding. Its function is as follows. Protease subunit of a proteasome-like degradation complex believed to be a general protein degrading machinery. The chain is ATP-dependent protease subunit HslV from Janthinobacterium sp. (strain Marseille) (Minibacterium massiliensis).